A 409-amino-acid chain; its full sequence is Argininosuccinate synthase (409 aa).

9–17 (AYSGGLDTS) serves as a coordination point for ATP. Tyrosine 86 contacts L-citrulline. An ATP-binding site is contributed by glycine 116. L-aspartate is bound by residues threonine 118, asparagine 122, and aspartate 123. Residue asparagine 122 coordinates L-citrulline. 5 residues coordinate L-citrulline: arginine 126, serine 174, serine 183, glutamate 259, and tyrosine 271.

Belongs to the argininosuccinate synthase family. Type 1 subfamily. In terms of assembly, homotetramer.

Its subcellular location is the cytoplasm. It catalyses the reaction L-citrulline + L-aspartate + ATP = 2-(N(omega)-L-arginino)succinate + AMP + diphosphate + H(+). Its pathway is amino-acid biosynthesis; L-arginine biosynthesis; L-arginine from L-ornithine and carbamoyl phosphate: step 2/3. In Halalkalibacterium halodurans (strain ATCC BAA-125 / DSM 18197 / FERM 7344 / JCM 9153 / C-125) (Bacillus halodurans), this protein is Argininosuccinate synthase.